A 259-amino-acid chain; its full sequence is Deoxyribose-phosphate aldolase (259 aa).

Aspartate 102 acts as the Proton donor/acceptor in catalysis. Catalysis depends on lysine 167, which acts as the Schiff-base intermediate with acetaldehyde. Lysine 201 functions as the Proton donor/acceptor in the catalytic mechanism.

This sequence belongs to the DeoC/FbaB aldolase family. DeoC type 2 subfamily.

The protein localises to the cytoplasm. It carries out the reaction 2-deoxy-D-ribose 5-phosphate = D-glyceraldehyde 3-phosphate + acetaldehyde. The protein operates within carbohydrate degradation; 2-deoxy-D-ribose 1-phosphate degradation; D-glyceraldehyde 3-phosphate and acetaldehyde from 2-deoxy-alpha-D-ribose 1-phosphate: step 2/2. In terms of biological role, catalyzes a reversible aldol reaction between acetaldehyde and D-glyceraldehyde 3-phosphate to generate 2-deoxy-D-ribose 5-phosphate. The protein is Deoxyribose-phosphate aldolase of Escherichia fergusonii (strain ATCC 35469 / DSM 13698 / CCUG 18766 / IAM 14443 / JCM 21226 / LMG 7866 / NBRC 102419 / NCTC 12128 / CDC 0568-73).